A 166-amino-acid polypeptide reads, in one-letter code: Phosphopantetheine adenylyltransferase (166 aa).

Ser8 is a substrate binding site. Residues 8–9 (SF) and His16 contribute to the ATP site. 3 residues coordinate substrate: Lys40, Thr72, and Arg86. Residues 87–89 (GLR), Glu97, and 122–128 (HSFLSSS) contribute to the ATP site.

It belongs to the bacterial CoaD family. Homohexamer. Mg(2+) serves as cofactor.

Its subcellular location is the cytoplasm. It carries out the reaction (R)-4'-phosphopantetheine + ATP + H(+) = 3'-dephospho-CoA + diphosphate. Its pathway is cofactor biosynthesis; coenzyme A biosynthesis; CoA from (R)-pantothenate: step 4/5. Functionally, reversibly transfers an adenylyl group from ATP to 4'-phosphopantetheine, yielding dephospho-CoA (dPCoA) and pyrophosphate. This Synechococcus sp. (strain RCC307) protein is Phosphopantetheine adenylyltransferase.